Reading from the N-terminus, the 302-residue chain is tRNA pseudouridine synthase B (302 aa).

Asp-42 serves as the catalytic Nucleophile.

This sequence belongs to the pseudouridine synthase TruB family. Type 1 subfamily.

It carries out the reaction uridine(55) in tRNA = pseudouridine(55) in tRNA. Functionally, responsible for synthesis of pseudouridine from uracil-55 in the psi GC loop of transfer RNAs. In Leifsonia xyli subsp. xyli (strain CTCB07), this protein is tRNA pseudouridine synthase B.